The sequence spans 241 residues: MAGHSKWANIQHRKGRQDAKRGKVFTKLIKEVTVAAKMGGGDPNANPRLRLAIDKAKAESMPKDNIENAIKRGTGQLEGVTYEEARYEGYGIAGAAVMVDCLTDNKTRTVADVRHAFSKYGGNMGTDGCVAFQFKHCGQLMFAPGTDEDALMEAALEAGAEDVVANDDGSIEVITGPWEFTTVKETLEKAGFTAEFGEVTMKAQNETELSGDDAARMQKLLDALESLDDVQEVYTSAVLDE.

The segment at 1-21 (MAGHSKWANIQHRKGRQDAKR) is disordered.

This sequence belongs to the TACO1 family.

The protein localises to the cytoplasm. This chain is Probable transcriptional regulatory protein azo0574, found in Azoarcus sp. (strain BH72).